Here is a 495-residue protein sequence, read N- to C-terminus: Glutamyl-tRNA(Gln) amidotransferase subunit A (495 aa).

Residues K78 and S159 each act as charge relay system in the active site. The active-site Acyl-ester intermediate is S183.

Belongs to the amidase family. GatA subfamily. In terms of assembly, heterotrimer of A, B and C subunits.

The catalysed reaction is L-glutamyl-tRNA(Gln) + L-glutamine + ATP + H2O = L-glutaminyl-tRNA(Gln) + L-glutamate + ADP + phosphate + H(+). Allows the formation of correctly charged Gln-tRNA(Gln) through the transamidation of misacylated Glu-tRNA(Gln) in organisms which lack glutaminyl-tRNA synthetase. The reaction takes place in the presence of glutamine and ATP through an activated gamma-phospho-Glu-tRNA(Gln). In Rhizorhabdus wittichii (strain DSM 6014 / CCUG 31198 / JCM 15750 / NBRC 105917 / EY 4224 / RW1) (Sphingomonas wittichii), this protein is Glutamyl-tRNA(Gln) amidotransferase subunit A.